A 343-amino-acid chain; its full sequence is Protein RecA (343 aa).

Position 66–73 (66–73 (GPESSGKT)) interacts with ATP.

Belongs to the RecA family.

Its subcellular location is the cytoplasm. In terms of biological role, can catalyze the hydrolysis of ATP in the presence of single-stranded DNA, the ATP-dependent uptake of single-stranded DNA by duplex DNA, and the ATP-dependent hybridization of homologous single-stranded DNAs. It interacts with LexA causing its activation and leading to its autocatalytic cleavage. The polypeptide is Protein RecA (Rickettsia bellii (strain OSU 85-389)).